Here is a 272-residue protein sequence, read N- to C-terminus: Shikimate dehydrogenase (NADP(+)) (272 aa).

Shikimate contacts are provided by residues 16-18 (SLS) and Thr63. Catalysis depends on Lys67, which acts as the Proton acceptor. NADP(+) is bound at residue Glu79. Asn88 and Asp103 together coordinate shikimate. Residues 127–131 (GAGGA), 151–156 (NRTMSR), and Ile212 contribute to the NADP(+) site. Tyr214 serves as a coordination point for shikimate. Gly235 contacts NADP(+).

The protein belongs to the shikimate dehydrogenase family. Homodimer.

The catalysed reaction is shikimate + NADP(+) = 3-dehydroshikimate + NADPH + H(+). The protein operates within metabolic intermediate biosynthesis; chorismate biosynthesis; chorismate from D-erythrose 4-phosphate and phosphoenolpyruvate: step 4/7. Its function is as follows. Involved in the biosynthesis of the chorismate, which leads to the biosynthesis of aromatic amino acids. Catalyzes the reversible NADPH linked reduction of 3-dehydroshikimate (DHSA) to yield shikimate (SA). This is Shikimate dehydrogenase (NADP(+)) from Staphylococcus epidermidis (strain ATCC 12228 / FDA PCI 1200).